The primary structure comprises 285 residues: Pantothenate synthetase (285 aa).

30–37 (MGYLHEGH) lines the ATP pocket. Histidine 37 functions as the Proton donor in the catalytic mechanism. Residue glutamine 61 coordinates (R)-pantoate. Glutamine 61 contributes to the beta-alanine binding site. 148–151 (GKKD) is an ATP binding site. Glutamine 154 provides a ligand contact to (R)-pantoate. ATP is bound by residues valine 177 and 185–188 (LSSR).

It belongs to the pantothenate synthetase family. In terms of assembly, homodimer.

It localises to the cytoplasm. The enzyme catalyses (R)-pantoate + beta-alanine + ATP = (R)-pantothenate + AMP + diphosphate + H(+). Its pathway is cofactor biosynthesis; (R)-pantothenate biosynthesis; (R)-pantothenate from (R)-pantoate and beta-alanine: step 1/1. Functionally, catalyzes the condensation of pantoate with beta-alanine in an ATP-dependent reaction via a pantoyl-adenylate intermediate. The sequence is that of Pantothenate synthetase from Leptospira interrogans serogroup Icterohaemorrhagiae serovar Lai (strain 56601).